Reading from the N-terminus, the 359-residue chain is Structure-specific endonuclease subunit SLX1 homolog (359 aa).

A GIY-YIG domain is found at 9-91; the sequence is GLFACYCLVA…TYPTRSRYVN (83 aa). The SLX1-type zinc finger occupies 192 to 238; it reads CPICQDGVSPSNVQCMQCSARFCITCAGKLFTRRNTLIPCFGKCPIC. The disordered stretch occupies residues 256–359; that stretch reads VAGRKSVPHK…LPSDVISITD (104 aa). The segment covering 269–281 has biased composition (polar residues); it reads VDGQSSLSQNSSY. Residues 295-306 show a composition bias toward basic and acidic residues; that stretch reads EPEKDDISRDES. Positions 316 to 326 are enriched in low complexity; it reads SSVALSDSSRS.

Belongs to the SLX1 family. In terms of assembly, forms a heterodimer with a member of the SLX4 family. A divalent metal cation serves as cofactor.

The protein localises to the nucleus. Its function is as follows. Catalytic subunit of a heterodimeric structure-specific endonuclease that resolves DNA secondary structures generated during DNA repair and recombination. Has endonuclease activity towards branched DNA substrates, introducing single-strand cuts in duplex DNA close to junctions with ss-DNA. This chain is Structure-specific endonuclease subunit SLX1 homolog, found in Giardia intestinalis (strain ATCC 50803 / WB clone C6) (Giardia lamblia).